We begin with the raw amino-acid sequence, 557 residues long: Urocanate hydratase (557 aa).

NAD(+)-binding positions include 53 to 54, Gln-131, 177 to 179, Glu-197, Arg-202, 243 to 244, 264 to 268, 274 to 275, and Tyr-323; these read GG, GMG, NA, QTSAH, and YL. Cys-411 is an active-site residue. Gly-493 is an NAD(+) binding site.

This sequence belongs to the urocanase family. Requires NAD(+) as cofactor.

The protein resides in the cytoplasm. It catalyses the reaction 4-imidazolone-5-propanoate = trans-urocanate + H2O. The protein operates within amino-acid degradation; L-histidine degradation into L-glutamate; N-formimidoyl-L-glutamate from L-histidine: step 2/3. Functionally, catalyzes the conversion of urocanate to 4-imidazolone-5-propionate. This chain is Urocanate hydratase, found in Pseudomonas putida (strain ATCC 700007 / DSM 6899 / JCM 31910 / BCRC 17059 / LMG 24140 / F1).